Reading from the N-terminus, the 274-residue chain is Bis(5'-nucleosyl)-tetraphosphatase, symmetrical (274 aa).

It belongs to the Ap4A hydrolase family.

It carries out the reaction P(1),P(4)-bis(5'-adenosyl) tetraphosphate + H2O = 2 ADP + 2 H(+). Its function is as follows. Hydrolyzes diadenosine 5',5'''-P1,P4-tetraphosphate to yield ADP. The chain is Bis(5'-nucleosyl)-tetraphosphatase, symmetrical from Buchnera aphidicola subsp. Acyrthosiphon pisum (strain 5A).